The sequence spans 179 residues: Large ribosomal subunit protein uL5c (179 aa).

It belongs to the universal ribosomal protein uL5 family. In terms of assembly, part of the 50S ribosomal subunit; contacts the 5S rRNA.

The protein resides in the plastid. It is found in the organellar chromatophore. Functionally, binds 5S rRNA, forms part of the central protuberance of the 50S subunit. This is Large ribosomal subunit protein uL5c (rpl5) from Paulinella chromatophora.